We begin with the raw amino-acid sequence, 216 residues long: Ribosomal RNA large subunit methyltransferase E (216 aa).

Residues glycine 60, tryptophan 62, aspartate 80, aspartate 96, and aspartate 121 each coordinate S-adenosyl-L-methionine. Residue lysine 161 is the Proton acceptor of the active site.

It belongs to the class I-like SAM-binding methyltransferase superfamily. RNA methyltransferase RlmE family.

It is found in the cytoplasm. It catalyses the reaction uridine(2552) in 23S rRNA + S-adenosyl-L-methionine = 2'-O-methyluridine(2552) in 23S rRNA + S-adenosyl-L-homocysteine + H(+). Functionally, specifically methylates the uridine in position 2552 of 23S rRNA at the 2'-O position of the ribose in the fully assembled 50S ribosomal subunit. The protein is Ribosomal RNA large subunit methyltransferase E of Pseudomonas savastanoi pv. phaseolicola (strain 1448A / Race 6) (Pseudomonas syringae pv. phaseolicola (strain 1448A / Race 6)).